The sequence spans 627 residues: Membrane protein insertase YidC (627 aa).

The chain crosses the membrane as a helical span at residues 8 to 28 (LFLALILSMGIWMGVNYFFFP). Residues 33 to 57 (KKNTETKQTQSDKTSENTKQQITSG) are compositionally biased toward polar residues. Residues 33–68 (KKNTETKQTQSDKTSENTKQQITSGKTKESNSADPV) form a disordered region. Residues 58 to 68 (KTKESNSADPV) are compositionally biased toward basic and acidic residues. Transmembrane regions (helical) follow at residues 417-437 (FTIP…KLVF), 488-508 (VGGC…YTAF), 536-556 (AIPY…LMVG), and 575-595 (MLMY…PSGV).

It belongs to the OXA1/ALB3/YidC family. Type 1 subfamily. In terms of assembly, interacts with the Sec translocase complex via SecD. Specifically interacts with transmembrane segments of nascent integral membrane proteins during membrane integration.

The protein localises to the cell inner membrane. In terms of biological role, required for the insertion and/or proper folding and/or complex formation of integral membrane proteins into the membrane. Involved in integration of membrane proteins that insert both dependently and independently of the Sec translocase complex, as well as at least some lipoproteins. Aids folding of multispanning membrane proteins. This Leptospira interrogans serogroup Icterohaemorrhagiae serovar Lai (strain 56601) protein is Membrane protein insertase YidC.